Consider the following 126-residue polypeptide: Large ribosomal subunit protein bL19 (126 aa).

Belongs to the bacterial ribosomal protein bL19 family.

In terms of biological role, this protein is located at the 30S-50S ribosomal subunit interface and may play a role in the structure and function of the aminoacyl-tRNA binding site. The chain is Large ribosomal subunit protein bL19 from Nitrobacter winogradskyi (strain ATCC 25391 / DSM 10237 / CIP 104748 / NCIMB 11846 / Nb-255).